A 475-amino-acid chain; its full sequence is Glutamate--tRNA ligase 2 (475 aa).

A 'HIGH' region motif is present at residues 11–21 (PSPTGFLHIGG). A compositionally biased stretch (basic and acidic residues) spans 116 to 133 (AEGRPPRYDGTWRDKDPA). The tract at residues 116–137 (AEGRPPRYDGTWRDKDPAEAPS) is disordered. Positions 240–244 (KLSKR) match the 'KMSKS' region motif. Residue K243 coordinates ATP.

The protein belongs to the class-I aminoacyl-tRNA synthetase family. Glutamate--tRNA ligase type 1 subfamily. In terms of assembly, monomer.

The protein resides in the cytoplasm. The enzyme catalyses tRNA(Glu) + L-glutamate + ATP = L-glutamyl-tRNA(Glu) + AMP + diphosphate. Its function is as follows. Catalyzes the attachment of glutamate to tRNA(Glu) in a two-step reaction: glutamate is first activated by ATP to form Glu-AMP and then transferred to the acceptor end of tRNA(Glu). The polypeptide is Glutamate--tRNA ligase 2 (Chelativorans sp. (strain BNC1)).